The sequence spans 214 residues: Octanoyltransferase (214 aa).

The BPL/LPL catalytic domain maps to 31–206; it reads KDDADEIWLL…QLAEQLGYNY (176 aa). Residues 70 to 77, 137 to 139, and 150 to 152 contribute to the substrate site; these read RGGQVTYH, SLG, and GLA. Residue C168 is the Acyl-thioester intermediate of the active site.

This sequence belongs to the LipB family.

It is found in the cytoplasm. It catalyses the reaction octanoyl-[ACP] + L-lysyl-[protein] = N(6)-octanoyl-L-lysyl-[protein] + holo-[ACP] + H(+). Its pathway is protein modification; protein lipoylation via endogenous pathway; protein N(6)-(lipoyl)lysine from octanoyl-[acyl-carrier-protein]: step 1/2. Functionally, catalyzes the transfer of endogenously produced octanoic acid from octanoyl-acyl-carrier-protein onto the lipoyl domains of lipoate-dependent enzymes. Lipoyl-ACP can also act as a substrate although octanoyl-ACP is likely to be the physiological substrate. This chain is Octanoyltransferase, found in Marinomonas sp. (strain MWYL1).